We begin with the raw amino-acid sequence, 401 residues long: Imidazolonepropionase (401 aa).

Fe(3+)-binding residues include His66 and His68. Zn(2+)-binding residues include His66 and His68. Positions 75, 138, and 171 each coordinate 4-imidazolone-5-propanoate. Tyr138 is an N-formimidoyl-L-glutamate binding site. His236 contacts Fe(3+). His236 serves as a coordination point for Zn(2+). A 4-imidazolone-5-propanoate-binding site is contributed by Gln239. Asp311 contributes to the Fe(3+) binding site. Asp311 lines the Zn(2+) pocket. Residues Asn313 and Gly315 each contribute to the N-formimidoyl-L-glutamate site. 4-imidazolone-5-propanoate is bound at residue Thr316.

It belongs to the metallo-dependent hydrolases superfamily. HutI family. It depends on Zn(2+) as a cofactor. Requires Fe(3+) as cofactor.

The protein localises to the cytoplasm. The catalysed reaction is 4-imidazolone-5-propanoate + H2O = N-formimidoyl-L-glutamate. It functions in the pathway amino-acid degradation; L-histidine degradation into L-glutamate; N-formimidoyl-L-glutamate from L-histidine: step 3/3. In terms of biological role, catalyzes the hydrolytic cleavage of the carbon-nitrogen bond in imidazolone-5-propanoate to yield N-formimidoyl-L-glutamate. It is the third step in the universal histidine degradation pathway. The protein is Imidazolonepropionase of Pseudomonas putida (Arthrobacter siderocapsulatus).